We begin with the raw amino-acid sequence, 704 residues long: DNA ligase (704 aa).

NAD(+) contacts are provided by residues 44-48 (DYEYD), 93-94 (SI), and glutamate 125. The N6-AMP-lysine intermediate role is filled by lysine 127. Arginine 148, glutamate 184, lysine 300, and lysine 324 together coordinate NAD(+). Zn(2+)-binding residues include cysteine 418, cysteine 421, cysteine 436, and cysteine 442. The BRCT domain maps to 625 to 704 (IISSNISGKI…DEWEHLINEK (80 aa)).

The protein belongs to the NAD-dependent DNA ligase family. LigA subfamily. Mg(2+) serves as cofactor. The cofactor is Mn(2+).

It carries out the reaction NAD(+) + (deoxyribonucleotide)n-3'-hydroxyl + 5'-phospho-(deoxyribonucleotide)m = (deoxyribonucleotide)n+m + AMP + beta-nicotinamide D-nucleotide.. Functionally, DNA ligase that catalyzes the formation of phosphodiester linkages between 5'-phosphoryl and 3'-hydroxyl groups in double-stranded DNA using NAD as a coenzyme and as the energy source for the reaction. It is essential for DNA replication and repair of damaged DNA. The sequence is that of DNA ligase from Pelobacter propionicus (strain DSM 2379 / NBRC 103807 / OttBd1).